A 419-amino-acid polypeptide reads, in one-letter code: Oxamate carbamoyltransferase subunit AllG (419 aa).

This sequence belongs to the AllG family. As to quaternary structure, the OXTCase is composed of 3 subunits, AllF, AllG and AllH. The cofactor is Mg(2+).

The catalysed reaction is oxamate + carbamoyl phosphate = N-carbamoyl-2-oxoglycine + phosphate. It participates in nitrogen metabolism; (S)-allantoin degradation. Its function is as follows. Component of a carbamoyltransferase involved in the anaerobic nitrogen utilization via the assimilation of allantoin. Catalyzes the conversion of oxalurate (N-carbamoyl-2-oxoglycine) to oxamate and carbamoyl phosphate. The sequence is that of Oxamate carbamoyltransferase subunit AllG from Escherichia coli (strain K12).